The following is a 532-amino-acid chain: Apolipoprotein N-acyltransferase (532 aa).

The next 6 helical transmembrane spans lie at 37-57 (IFVAGFVSFPVLVWLIDGAIA), 75-95 (WWFGFGYFVSGLWWIGTALLV), 106-126 (LAVLGLPAFLALFYAFAAMIA), 128-148 (LLWSDGLGRILAFAFGFALAE), 179-199 (VIGLVGMSALAVFVFAAPALL), and 207-227 (TGIGLAIFLALAHVGFGAWTL). The CN hydrolase domain occupies 245–494 (VQPSIAQAMK…VGVVDSYLPS (250 aa)). Glu289 serves as the catalytic Proton acceptor. Lys353 is an active-site residue. Cys406 functions as the Nucleophile in the catalytic mechanism. The helical transmembrane segment at 505–525 (GWIQTVLILLTLLAASVGLIL) threads the bilayer.

The protein belongs to the CN hydrolase family. Apolipoprotein N-acyltransferase subfamily.

Its subcellular location is the cell inner membrane. The catalysed reaction is N-terminal S-1,2-diacyl-sn-glyceryl-L-cysteinyl-[lipoprotein] + a glycerophospholipid = N-acyl-S-1,2-diacyl-sn-glyceryl-L-cysteinyl-[lipoprotein] + a 2-acyl-sn-glycero-3-phospholipid + H(+). It participates in protein modification; lipoprotein biosynthesis (N-acyl transfer). Functionally, catalyzes the phospholipid dependent N-acylation of the N-terminal cysteine of apolipoprotein, the last step in lipoprotein maturation. The chain is Apolipoprotein N-acyltransferase from Brucella melitensis biotype 1 (strain ATCC 23456 / CCUG 17765 / NCTC 10094 / 16M).